Consider the following 730-residue polypeptide: Dual function macrocyclase-peptidase POPB (730 aa).

Catalysis depends on charge relay system residues S577, D661, and H698.

Belongs to the peptidase S9A family. In terms of assembly, monomer. Expressed in the pileus (cap) and lamellae where it colocalizes with amanitin.

The enzyme catalyses Hydrolysis of Pro-|-Xaa &gt;&gt; Ala-|-Xaa in oligopeptides.. Functionally, dual function macrocyclase-peptidase involved in the biosynthesis of the highly toxic amanitin toxin family of macrocycles. Cleaves peptide bonds on the C-terminal side of prolyl residues. The enzyme first removes 10 residues from the N-terminus of a 35-residue substrate. Conformational trapping of the 25 amino-acid peptide forces the enzyme to release this intermediate rather than proceed to macrocyclization. The enzyme rebinds the 25 amino-acid peptide in a different conformation and catalyzes macrocyclization of the N-terminal eight residues. The polypeptide is Dual function macrocyclase-peptidase POPB (Amanita bisporigera (Destroying angel)).